Reading from the N-terminus, the 924-residue chain is DNA repair and recombination protein RDH54 (924 aa).

Residues 1–10 (MQIPKYENKP) show a composition bias toward basic and acidic residues. Disordered regions lie at residues 1 to 21 (MQIP…GSNK) and 155 to 183 (EALS…NDGG). Low complexity predominate over residues 168–178 (TTSTTETVPST). Residues 299–487 (LENDSDISGC…FTIIDFINPG (189 aa)) enclose the Helicase ATP-binding domain. 346–353 (IPLTGLCK) lines the ATP pocket. Positions 472–475 (NDLN) match the DEGH box motif. Lys-615 is covalently cross-linked (Glycyl lysine isopeptide (Lys-Gly) (interchain with G-Cter in ubiquitin)). The region spanning 631 to 790 (KLKVLMTLLE…DSEMRNKESS (160 aa)) is the Helicase C-terminal domain.

Belongs to the SNF2/RAD54 helicase family. As to quaternary structure, interacts with RAD51 and DMC1.

It localises to the nucleus. The enzyme catalyses ATP + H2O = ADP + phosphate + H(+). In terms of biological role, involved in the recombinational repair of double-strand breaks (DSB) in DNA during mitosis and meiosis. Has DNA dependent ATPase activity. Promotes D-loop (displacement loop) formation with RAD51 recombinase. Modifies the topology of double-stranded DNA during the D-loop reaction to facilitate the invasion of the homologous duplex molecule by the initiating single-stranded DNA substrate. Required for adaptation from G2/M checkpoint arrest induced by a double strand break, by participating in monitoring the extent of single-stranded DNA produced by resection of DNA ends. This role is distinct from its roles in recombination. Promotes colocalization of RAD51 and DMC1 during meiotic recombination. Involved in crossover interference. The sequence is that of DNA repair and recombination protein RDH54 (RDH54) from Saccharomyces cerevisiae (strain JAY291) (Baker's yeast).